Here is a 1596-residue protein sequence, read N- to C-terminus: A-kinase anchor protein SPHKAP (1596 aa).

Disordered regions lie at residues 214–233, 242–319, 389–432, 462–481, and 760–809; these read KHGRLAGQRAAEDDTNRSVS, ASEQ…TPKQ, DNSE…GHPA, SGEEYECEDEEEESETDQGE, and EQSD…SSSS. Polar residues predominate over residues 292–306; it reads TLCTSSNSQKLSRTY. Residues 462-479 are compositionally biased toward acidic residues; that stretch reads SGEEYECEDEEEESETDQ. Residues 829-846 form a PKA-RII subunit binding domain region; it reads FAEDLATTVVSMATELAA. 3 disordered regions span residues 958 to 1022, 1282 to 1310, and 1328 to 1443; these read VVDT…ISKQ, VGERRHGFKHSRCNNSGNRPGVEHQENSC, and VPLI…SSLG. Over residues 959–971 the composition is skewed to polar residues; that stretch reads VDTSKSGQSSRSR. Over residues 1333–1356 the composition is skewed to basic and acidic residues; it reads IEPDQREEASEEKGGVETHHREAS. A compositionally biased stretch (polar residues) spans 1357-1372; that stretch reads HQTQQQSGKGSETATK. 2 stretches are compositionally biased toward low complexity: residues 1398-1409 and 1430-1443; these read LSASSEESGSGS and LSEGNGNSSTSSLG.

This sequence belongs to the AKAP110 family.

It localises to the cytoplasm. Anchoring protein that mediates the subcellular compartmentation of cAMP-dependent protein kinase (PKA type II). This is A-kinase anchor protein SPHKAP (sphkap) from Danio rerio (Zebrafish).